Reading from the N-terminus, the 179-residue chain is Large ribosomal subunit protein uL5 (179 aa).

Belongs to the universal ribosomal protein uL5 family. In terms of assembly, part of the 50S ribosomal subunit; part of the 5S rRNA/L5/L18/L25 subcomplex. Contacts the 5S rRNA and the P site tRNA. Forms a bridge to the 30S subunit in the 70S ribosome.

This is one of the proteins that bind and probably mediate the attachment of the 5S RNA into the large ribosomal subunit, where it forms part of the central protuberance. In the 70S ribosome it contacts protein S13 of the 30S subunit (bridge B1b), connecting the 2 subunits; this bridge is implicated in subunit movement. Contacts the P site tRNA; the 5S rRNA and some of its associated proteins might help stabilize positioning of ribosome-bound tRNAs. The sequence is that of Large ribosomal subunit protein uL5 from Macrococcus caseolyticus (strain JCSC5402) (Macrococcoides caseolyticum).